We begin with the raw amino-acid sequence, 376 residues long: MTATAQRQRPIDTTGAGQRAQQAELHPELNRAHVRFINLGKTYHGKQGPVEALGNIDLAVQHGEIFGIIGRSGAGKSSLIRTINRLEQPSNGRVLIDQVDIGEFDEDKLVELRRRIGMIFQHFNLMSAKNVWQNVELPLKVAGVPREQRARKVAQLLELVGLQDKHKAYPAQLSGGQKQRVGIARALVHDPAILLCDEATSALDPETTQSILGLLREINQRLGLTIVLITHEMAVIRDICHRVVVLEQGRIVEQGPVWQVFGDPQHEVSKTLLAPLQTGLPKEWAERLSDQPQRPDAALLLDVHFTGVSAEGPDLAALFTALGGKVELLQGGVERIQDRAIGHLILSVAGSPHSRDELLARARTLAPRAEVLGYVG.

The tract at residues 1–25 is disordered; it reads MTATAQRQRPIDTTGAGQRAQQAEL. The 240-residue stretch at 34 to 273 folds into the ABC transporter domain; that stretch reads VRFINLGKTY…PQHEVSKTLL (240 aa). 70 to 77 contacts ATP; the sequence is GRSGAGKS.

This sequence belongs to the ABC transporter superfamily. Methionine importer (TC 3.A.1.24) family. As to quaternary structure, the complex is composed of two ATP-binding proteins (MetN), two transmembrane proteins (MetI) and a solute-binding protein (MetQ).

The protein resides in the cell inner membrane. It catalyses the reaction L-methionine(out) + ATP + H2O = L-methionine(in) + ADP + phosphate + H(+). The enzyme catalyses D-methionine(out) + ATP + H2O = D-methionine(in) + ADP + phosphate + H(+). Its function is as follows. Part of the ABC transporter complex MetNIQ involved in methionine import. Responsible for energy coupling to the transport system. This chain is Methionine import ATP-binding protein MetN 2, found in Pseudomonas syringae pv. syringae (strain B728a).